Consider the following 291-residue polypeptide: Phosphatidylserine decarboxylase proenzyme (291 aa).

Catalysis depends on charge relay system; for autoendoproteolytic cleavage activity residues aspartate 93, histidine 150, and serine 253. Serine 253 acts as the Schiff-base intermediate with substrate; via pyruvic acid; for decarboxylase activity in catalysis. At serine 253 the chain carries Pyruvic acid (Ser); by autocatalysis.

Belongs to the phosphatidylserine decarboxylase family. PSD-B subfamily. Prokaryotic type I sub-subfamily. Heterodimer of a large membrane-associated beta subunit and a small pyruvoyl-containing alpha subunit. Pyruvate is required as a cofactor. In terms of processing, is synthesized initially as an inactive proenzyme. Formation of the active enzyme involves a self-maturation process in which the active site pyruvoyl group is generated from an internal serine residue via an autocatalytic post-translational modification. Two non-identical subunits are generated from the proenzyme in this reaction, and the pyruvate is formed at the N-terminus of the alpha chain, which is derived from the carboxyl end of the proenzyme. The autoendoproteolytic cleavage occurs by a canonical serine protease mechanism, in which the side chain hydroxyl group of the serine supplies its oxygen atom to form the C-terminus of the beta chain, while the remainder of the serine residue undergoes an oxidative deamination to produce ammonia and the pyruvoyl prosthetic group on the alpha chain. During this reaction, the Ser that is part of the protease active site of the proenzyme becomes the pyruvoyl prosthetic group, which constitutes an essential element of the active site of the mature decarboxylase.

It is found in the cell membrane. It carries out the reaction a 1,2-diacyl-sn-glycero-3-phospho-L-serine + H(+) = a 1,2-diacyl-sn-glycero-3-phosphoethanolamine + CO2. The protein operates within phospholipid metabolism; phosphatidylethanolamine biosynthesis; phosphatidylethanolamine from CDP-diacylglycerol: step 2/2. Catalyzes the formation of phosphatidylethanolamine (PtdEtn) from phosphatidylserine (PtdSer). The chain is Phosphatidylserine decarboxylase proenzyme from Alcanivorax borkumensis (strain ATCC 700651 / DSM 11573 / NCIMB 13689 / SK2).